Reading from the N-terminus, the 163-residue chain is Endoribonuclease YbeY (163 aa).

Residues H126, H130, and H136 each coordinate Zn(2+).

This sequence belongs to the endoribonuclease YbeY family. Zn(2+) serves as cofactor.

Its subcellular location is the cytoplasm. Functionally, single strand-specific metallo-endoribonuclease involved in late-stage 70S ribosome quality control and in maturation of the 3' terminus of the 16S rRNA. The polypeptide is Endoribonuclease YbeY (Chelativorans sp. (strain BNC1)).